The following is a 100-amino-acid chain: Large ribosomal subunit protein uL23 (100 aa).

The protein belongs to the universal ribosomal protein uL23 family. In terms of assembly, part of the 50S ribosomal subunit. Contacts protein L29, and trigger factor when it is bound to the ribosome.

Functionally, one of the early assembly proteins it binds 23S rRNA. One of the proteins that surrounds the polypeptide exit tunnel on the outside of the ribosome. Forms the main docking site for trigger factor binding to the ribosome. The protein is Large ribosomal subunit protein uL23 of Mycolicibacterium smegmatis (strain ATCC 700084 / mc(2)155) (Mycobacterium smegmatis).